Consider the following 457-residue polypeptide: MLLRAAWRRAAVAVTAAPGPKPAAPTRGLRLRVGDRAPQSAVPADTAAAPEVGPVLRPLYMDVQATTPLDPRVLDAMLPYLINYYGNPHSRTHAYGWESEAAMERARQQVASLIGADPREIIFTSGATESNNIAIKGVARFYRSRKKHLITTQTEHKCVLDSCRSLEAEGFQVTYLPVQKSGIIDLKELEAAIQPDTSLVSVMTVNNEIGVKQPIAEIGRICSSRKVYFHTDAAQAVGKIPLDVNDMKIDLMSISGHKIYGPKGVGAIYIRRRPRVRVEALQSGGGQERGMRSGTVPTPLVVGLGAACEVAQQEMEYDHKRISKLSERLIQNIMKSLPDVVMNGDPKHHYPGCINLSFAYVEGESLLMALKDVALSSGSACTSASLEPSYVLRAIGTDEDLAHSSIRFGIGRFTTEEEVDYTVEKCIQHVKRLREMSPLWEMVQDGIDLKSIKWTQH.

Residues A127, T128, Q235, S255, and H257 each contribute to the pyridoxal 5'-phosphate site. K258 is subject to N6-(pyridoxal phosphate)lysine. T295 contacts pyridoxal 5'-phosphate. C381 functions as the Cysteine persulfide intermediate in the catalytic mechanism. C381 contacts [2Fe-2S] cluster. Residue C381 participates in Zn(2+) binding. Residue C381 is modified to Cysteine persulfide.

This sequence belongs to the class-V pyridoxal-phosphate-dependent aminotransferase family. NifS/IscS subfamily. As to quaternary structure, homodimer. Component of the mitochondrial core iron-sulfur cluster (ISC) complex composed of NFS1, LYRM4, NDUFAB1, ISCU, FXN, and FDX2; this complex is a heterohexamer containing two copies of each monomer. Component of cyteine desulfurase complex composed of NFS1, LYRM4 and NDUFAB1; this complex contributes to the activation of cysteine desulfurase activity and NFS1 stabilization. Interacts (homodimer form) with ISCU (D-state); each monomer interacts with the C-terminal regions of each NFS1 monomer. Interacts with HSPA9. Interacts (via homodimer form) with FDX2. Interacts (via homodimer form) with FXN. Interacts with LYRM4. Component of a complex composed of FXN, NFS1, LYRM4 and ISCU. Monomer. Homodimer. Oligomer. Interacts with ISCU. Component of the cysteine desulfurase complex composed of NFS1 and LYRM4; this complex contributes to the activation of cysteine desulfurase activity. Interacts with MOCS3. Pyridoxal 5'-phosphate serves as cofactor. In terms of processing, N-gluconoylated. Post-translationally, cysteine persulfide intermediate is reduced by thiol-containing molecules like glutathione and L-cysteine. Persulfide reduction is a rate-limiting step of cysteine desulfurase catalytic cycle. Predominantly expressed in heart and skeletal muscle. Also found in brain, liver and pancreas.

It is found in the mitochondrion. Its subcellular location is the cytoplasm. The protein resides in the nucleus. The protein localises to the cytoskeleton. It localises to the microtubule organizing center. It is found in the centrosome. The enzyme catalyses (sulfur carrier)-H + L-cysteine = (sulfur carrier)-SH + L-alanine. It carries out the reaction L-cysteinyl-[cysteine desulfurase] + L-cysteine = S-sulfanyl-L-cysteinyl-[cysteine desulfurase] + L-alanine. With respect to regulation, active only in complex with LYRM4. In terms of biological role, cysteine desulfurase, of the core iron-sulfur cluster (ISC) assembly complex, that catalyzes the desulfuration of L-cysteine to L-alanine, as component of the cysteine desulfurase complex, leading to the formation of a cysteine persulfide intermediate at the active site cysteine residue and participates in the [2Fe-2S] clusters assembly on the scaffolding protein ISCU. The persulfide is then transferred on the flexible Cys loop from the catalytic site of NFS1 to the surface of NFS1. After the NFS1-linked persulfide sulfur is transferred to one of the conserved Cys residues of the scaffold, a reaction assisted by FXN. The core iron-sulfur cluster (ISC) assembly complex is involved in the de novo synthesis of a [2Fe-2S] cluster, the first step of the mitochondrial iron-sulfur protein biogenesis. This process is initiated by the cysteine desulfurase complex (NFS1:LYRM4:NDUFAB1) that produces persulfide which is delivered on the scaffold protein ISCU in a FXN-dependent manner. Then this complex is stabilized by FDX2 which provides reducing equivalents to accomplish the [2Fe-2S] cluster assembly. Finally, the [2Fe-2S] cluster is transferred from ISCU to chaperone proteins, including HSCB, HSPA9 and GLRX5. Its function is as follows. May catalyze the desulfuration of L-cysteine to L-alanine as component of the cysteine desulfurase complex (NFS1:LYRM4), leading to the formation of a cysteine persulfide intermediate. Acts as a sulfur donor for MOCS3 by transferring the sulfur of the cysteine persulfide intermediate on MOCS3. This Homo sapiens (Human) protein is Cysteine desulfurase.